The primary structure comprises 121 residues: MVQIVISSTGAEGLAEWVLMELQGEIEARYSTGLAGNLLGDLHYTTEGIPVLIVGHHILYGKIIHLEKPFAVLVKHTPGKQDCDELGRETGTQYLVTALIKNKILFKTRPKPIITNVPKKV.

It belongs to the CTF8 family. As to quaternary structure, component of the CTF18-RFC complex, which consists of CTF18, CTF8, DSCC1, RFC2, RFC3, RFC4 and RFC5. The CTF18-RFC complex does not interact with the Rad9/Rad1/Hus1 complex. The CTF18-RFC complex interacts with POLH. CTF18/CTF8/DSCC1 associate with PCNA. CTF8 exists as a dimer with DSCC1.

It localises to the nucleus. Its function is as follows. Chromosome cohesion factor involved in sister chromatid cohesion and fidelity of chromosome transmission. Component of one of the cell nuclear antigen loader complexes, CTF18-replication factor C (CTF18-RFC), which consists of CTF18, CTF8, DSCC1, RFC2, RFC3, RFC4 and RFC5. The CTF18-RFC complex binds to single-stranded and primed DNAs and has weak ATPase activity that is stimulated the presence of primed DNA, replication protein A (RPA) and proliferating cell nuclear antigen (PCNA). The CTF18-RFC complex catalyzes the ATP-dependent loading of PCNA onto primed and gapped DNA. It also interacts with and stimulates POLH, which is suggestive of a protein network that coordinates DNA repair, recombination and chromosome cohesion reactions with replication fork progression. This is Chromosome transmission fidelity protein 8 homolog from Rattus norvegicus (Rat).